The following is a 263-amino-acid chain: Elongation factor Ts (263 aa).

The involved in Mg(2+) ion dislocation from EF-Tu stretch occupies residues Thr82–Val85. Low complexity predominate over residues Ala221–Ser251. Positions Ala221–Lys263 are disordered. Positions Ala254 to Lys263 are enriched in basic residues.

Belongs to the EF-Ts family.

The protein localises to the cytoplasm. Functionally, associates with the EF-Tu.GDP complex and induces the exchange of GDP to GTP. It remains bound to the aminoacyl-tRNA.EF-Tu.GTP complex up to the GTP hydrolysis stage on the ribosome. This is Elongation factor Ts from Cyanothece sp. (strain PCC 7425 / ATCC 29141).